The primary structure comprises 417 residues: 4-hydroxy-3-methylbut-2-en-1-yl diphosphate synthase (flavodoxin) (417 aa).

Positions 305, 308, 351, and 358 each coordinate [4Fe-4S] cluster.

Belongs to the IspG family. It depends on [4Fe-4S] cluster as a cofactor.

It catalyses the reaction (2E)-4-hydroxy-3-methylbut-2-enyl diphosphate + oxidized [flavodoxin] + H2O + 2 H(+) = 2-C-methyl-D-erythritol 2,4-cyclic diphosphate + reduced [flavodoxin]. It functions in the pathway isoprenoid biosynthesis; isopentenyl diphosphate biosynthesis via DXP pathway; isopentenyl diphosphate from 1-deoxy-D-xylulose 5-phosphate: step 5/6. Its function is as follows. Converts 2C-methyl-D-erythritol 2,4-cyclodiphosphate (ME-2,4cPP) into 1-hydroxy-2-methyl-2-(E)-butenyl 4-diphosphate. This chain is 4-hydroxy-3-methylbut-2-en-1-yl diphosphate synthase (flavodoxin), found in Nitrosomonas europaea (strain ATCC 19718 / CIP 103999 / KCTC 2705 / NBRC 14298).